The following is a 522-amino-acid chain: Calcium-dependent protein kinase 4 (522 aa).

Positions 1–10 are enriched in polar residues; it reads MGACFSSHTA. The segment at 1–43 is disordered; the sequence is MGACFSSHTATAAADGGSGKRQQRKGDHKGKLPDGGGGEKEKE. A lipid anchor (N-myristoyl glycine) is attached at Gly2. Residues 29-43 are compositionally biased toward basic and acidic residues; that stretch reads KGKLPDGGGGEKEKE. One can recognise a Protein kinase domain in the interval 59–319; it reads YQVGRLLGHG…AAQALSHPWV (261 aa). Residues 65-73 and Lys88 contribute to the ATP site; that span reads LGHGQFGYT. Asp185 acts as the Proton acceptor in catalysis. Residues 325–355 form an autoinhibitory domain region; it reads ASEIPVDISVLSNMRQFVKYSRFKQFALRAL. 4 EF-hand domains span residues 362–397, 399–434, 441–476, and 481–508; these read EELA…DLPW, LKGP…IHQM, RWGL…GLKG, and LLEE…ASMS. Residues Asp375, Asp377, Ser379, Ser381, Glu386, Asp412, Asn414, Asp416, Glu423, Asp454, Asp456, Asp458, Tyr460, Glu465, Asp486, Asp488, Asp490, Arg492, and Glu497 each contribute to the Ca(2+) site.

This sequence belongs to the protein kinase superfamily. Ser/Thr protein kinase family. CDPK subfamily.

The protein resides in the membrane. It carries out the reaction L-seryl-[protein] + ATP = O-phospho-L-seryl-[protein] + ADP + H(+). It catalyses the reaction L-threonyl-[protein] + ATP = O-phospho-L-threonyl-[protein] + ADP + H(+). Its activity is regulated as follows. Activated by calcium. Autophosphorylation may play an important role in the regulation of the kinase activity. May play a role in signal transduction pathways that involve calcium as a second messenger. The sequence is that of Calcium-dependent protein kinase 4 from Oryza sativa subsp. japonica (Rice).